Reading from the N-terminus, the 368-residue chain is MDPIKHISLPVLVLFLLLSVSAGQPGTPDQRHDPYAYSGSLSPAMAVVVVVVIAALFFMGFFTVYIRHCTGAVDGSVTPAGGARRRVTNATVARGLDAETIETFPTFVYSEVKTQKIGKGALECAICLNEFEDDETLRLLPKCDHVFHPHCIGAWLQGHVTCPVCRTNLAEQTPEPEVVVETDLEAQQQSAVPVPVVELPRVKFPRSHTTGHSVVLPGESTDRFTLRVPEELRKKIMANWKLNRSNSVFVLPRGGSSRSGKQVDRSRAKSDRWLFRKTPSFLWRNRDDGSIRLGGTGSVRGNSVTSPSGDSVRADRWAFLRNPSFLWRNTTPVPSPRVEVNNKDGEGTSSVQHIGTVGSTSGSLRLPV.

The N-terminal stretch at 1–23 (MDPIKHISLPVLVLFLLLSVSAG) is a signal peptide. Residues 46–66 (AVVVVVVIAALFFMGFFTVYI) traverse the membrane as a helical segment. The RING-type; atypical zinc finger occupies 124-166 (CAICLNEFEDDETLRLLPKCDHVFHPHCIGAWLQGHVTCPVCR). S247 carries the post-translational modification Phosphoserine. A disordered region spans residues 342 to 368 (NKDGEGTSSVQHIGTVGSTSGSLRLPV). Residues 347–368 (GTSSVQHIGTVGSTSGSLRLPV) are compositionally biased toward polar residues.

This sequence belongs to the RING-type zinc finger family. ATL subfamily.

It localises to the membrane. The enzyme catalyses S-ubiquitinyl-[E2 ubiquitin-conjugating enzyme]-L-cysteine + [acceptor protein]-L-lysine = [E2 ubiquitin-conjugating enzyme]-L-cysteine + N(6)-ubiquitinyl-[acceptor protein]-L-lysine.. It participates in protein modification; protein ubiquitination. E3 ubiquitin-protein ligase that is required for the plant C/N response during seedling growth transition. May be involved in the early steps of the plant defense signaling pathway. The sequence is that of E3 ubiquitin-protein ligase ATL31 (ATL31) from Arabidopsis thaliana (Mouse-ear cress).